The sequence spans 215 residues: Na(+)-translocating NADH-quinone reductase subunit D (215 aa).

6 consecutive transmembrane segments (helical) span residues 14 to 34, 42 to 62, 72 to 92, 103 to 123, 131 to 151, and 178 to 198; these read PFIS…ALAV, FVMA…ISLI, IIVQ…LLKA, VFVG…AYAM, FLDG…VGTI, and NGML…IWVL.

Belongs to the NqrDE/RnfAE family. Composed of six subunits; NqrA, NqrB, NqrC, NqrD, NqrE and NqrF.

The protein localises to the cell inner membrane. The enzyme catalyses a ubiquinone + n Na(+)(in) + NADH + H(+) = a ubiquinol + n Na(+)(out) + NAD(+). Functionally, NQR complex catalyzes the reduction of ubiquinone-1 to ubiquinol by two successive reactions, coupled with the transport of Na(+) ions from the cytoplasm to the periplasm. NqrA to NqrE are probably involved in the second step, the conversion of ubisemiquinone to ubiquinol. The protein is Na(+)-translocating NADH-quinone reductase subunit D of Tolumonas auensis (strain DSM 9187 / NBRC 110442 / TA 4).